We begin with the raw amino-acid sequence, 507 residues long: Glucose transporter type 3 (507 aa).

Residues 1–26 form a disordered region; it reads MRKGGIQDAEPVEPPQSSRKSGTWFA. Residues 1-53 are Cytoplasmic-facing; it reads MRKGGIQDAEPVEPPQSSRKSGTWFAKRPSEMPERHVERAPVRQKINNVGLYK. The helical transmembrane segment at 54–74 threads the bilayer; it reads ATLYSNIGSFFFGIAVGWSGT. The Extracellular portion of the chain corresponds to 75-95; the sequence is AERSVMEQHSYSFQPTELQWS. Residues 96–116 traverse the membrane as a helical segment; the sequence is GVCILLTLGAALWCLPMGLMV. Residues 117-124 are Cytoplasmic-facing; that stretch reads RLLGCRRT. Residues 125 to 145 traverse the membrane as a helical segment; it reads ILIQLLPNFLGWFLTVFARSV. Residues 146–152 lie on the Extracellular side of the membrane; the sequence is PMLYAGR. The chain crosses the membrane as a helical span at residues 153–173; the sequence is FFLGMCGGAHCVVVPIYNAEI. The Cytoplasmic portion of the chain corresponds to 174 to 183; the sequence is STTKKRGAMG. Residues 184-204 traverse the membrane as a helical segment; it reads VVFEGACICGVIYSFAMSLFL. Residues 205 to 207 lie on the Extracellular side of the membrane; it reads ELR. A helical transmembrane segment spans residues 208–228; it reads IINFVNLGLLALGPLQILMPE. The Cytoplasmic segment spans residues 229–293; the sequence is SPAYYVDHGN…YKKVRRSLAR (65 aa). A helical membrane pass occupies residues 294–314; that stretch reads SLAIALLQKLCGALIFIFYGL. Residues 315–324 are Extracellular-facing; that stretch reads NMLDCLRIRR. A helical transmembrane segment spans residues 325–345; the sequence is EFGLILCLGLILGFLACFFLV. Over 346–351 the chain is Cytoplasmic; sequence DRLGRR. A helical transmembrane segment spans residues 352-372; it reads PLLIFSSAGIVFVSIYLGLHF. Topologically, residues 373–374 are extracellular; the sequence is KV. The helical transmembrane segment at 375 to 395 threads the bilayer; that stretch reads WMTMGLTVMSWIALFCIAIFV. Residues 396 to 420 lie on the Cytoplasmic side of the membrane; sequence GCYTAGVGSLTWVLNAELLVRPMRP. Residues 421-441 form a helical membrane-spanning segment; sequence LGCSIVCAFNWLTAFFVICWF. Residues 442-450 lie on the Extracellular side of the membrane; sequence GSHGVKCQP. The helical transmembrane segment at 451 to 471 threads the bilayer; that stretch reads YLFLLFAIIASLILLFSLIYI. The Cytoplasmic portion of the chain corresponds to 472 to 507; sequence PETKKLSSAKIQQRLGGLINRPAVITFTSSSDSSNA.

It belongs to the major facilitator superfamily. Sugar transporter (TC 2.A.1.1) family. Glucose transporter subfamily.

The protein localises to the cell membrane. It is found in the perikaryon. Its subcellular location is the cell projection. Functionally, facilitative glucose transporter that can also mediate the uptake of various other monosaccharides across the cell membrane. The polypeptide is Glucose transporter type 3 (Glut3) (Drosophila melanogaster (Fruit fly)).